The sequence spans 636 residues: Chitin synthase VI (636 aa).

The next 4 helical transmembrane spans lie at 23–43 (LQWF…LFCI), 374–394 (TIRT…TTTA), 399–419 (LPVG…LYFG), and 427–447 (IWFY…YMVY). The tract at residues 595 to 636 (QRLRLEQRPRTGPSLNARWQNGPQASETSQGRSQVDDVGIAF) is disordered. Positions 607–627 (PSLNARWQNGPQASETSQGRS) are enriched in polar residues.

It belongs to the chitin synthase family. Class VI subfamily. As to expression, moderately expressed during appressorium formation.

It localises to the cell membrane. The enzyme catalyses [(1-&gt;4)-N-acetyl-beta-D-glucosaminyl](n) + UDP-N-acetyl-alpha-D-glucosamine = [(1-&gt;4)-N-acetyl-beta-D-glucosaminyl](n+1) + UDP + H(+). In terms of biological role, polymerizes chitin, a structural polymer of the cell wall and septum, by transferring the sugar moiety of UDP-GlcNAc to the non-reducing end of the growing chitin polymer. Contributes to the production of conidia but is the only chitine synthase that does not contribute to the ability of fungal conidia to germinate. Involved in fungal stress tolerances. This is Chitin synthase VI from Metarhizium acridum (strain CQMa 102).